Here is a 550-residue protein sequence, read N- to C-terminus: MIYPKIPLAQSIIEICNTKGLHHIVISPGSRNAPLTIGFTNNPVFTCYSIADERCAAFFALGIAQQLKKPVALVCTSGSALLNYYPAFAEAFYSQIPLVVISADRPQSKIDIGDGQTIRQENVFANHSLYNANLVENVSEENDAKIQEAIHLATTKKGPVHINVPFEEPLYETVDTISVNTKIIDFDTENKPLENLDVFVNRWNDAKKKLILIGGCDPNVIQQFIIDFLANDTSVVVMTEVTSNVHHANFITNIDAIITPFTDDDFTNFQPEILITMGGMIVSKRIKAFLRKYKPQQHWHIDELRAYDTFGSLTKHFEVLPSVFFKEFIPKINSLESNYLPYSLEIKKVRTQKTNTYLATIPFSDFKAFEIILPKLPLYSQLQISNSSAIRYAQLFSIHSSIEVFCNRGTSGIDGSTSTAIGAAIASGKETILITGDISFLYDSNALWNNYIPENFKIILLNNGGGGIFRILPGHKENETFNTYFETSHRLTAKYLAKMYNFGYEKAVDEKTLAEKLKITINTKKSIILEVFTPTKVNDLVLLNYFKNLT.

This sequence belongs to the TPP enzyme family. MenD subfamily. As to quaternary structure, homodimer. Mg(2+) is required as a cofactor. Mn(2+) serves as cofactor. The cofactor is thiamine diphosphate.

The catalysed reaction is isochorismate + 2-oxoglutarate + H(+) = 5-enolpyruvoyl-6-hydroxy-2-succinyl-cyclohex-3-ene-1-carboxylate + CO2. It functions in the pathway quinol/quinone metabolism; 1,4-dihydroxy-2-naphthoate biosynthesis; 1,4-dihydroxy-2-naphthoate from chorismate: step 2/7. It participates in quinol/quinone metabolism; menaquinone biosynthesis. Catalyzes the thiamine diphosphate-dependent decarboxylation of 2-oxoglutarate and the subsequent addition of the resulting succinic semialdehyde-thiamine pyrophosphate anion to isochorismate to yield 2-succinyl-5-enolpyruvyl-6-hydroxy-3-cyclohexene-1-carboxylate (SEPHCHC). The polypeptide is 2-succinyl-5-enolpyruvyl-6-hydroxy-3-cyclohexene-1-carboxylate synthase (Flavobacterium psychrophilum (strain ATCC 49511 / DSM 21280 / CIP 103535 / JIP02/86)).